The primary structure comprises 894 residues: DNA mismatch repair protein MutS (894 aa).

Residue 607–614 (GPNMSGKS) coordinates ATP.

Belongs to the DNA mismatch repair MutS family.

In terms of biological role, this protein is involved in the repair of mismatches in DNA. It is possible that it carries out the mismatch recognition step. This protein has a weak ATPase activity. The polypeptide is DNA mismatch repair protein MutS (Bacillus cereus (strain ZK / E33L)).